The primary structure comprises 185 residues: Ribosome-recycling factor (185 aa).

This sequence belongs to the RRF family.

The protein localises to the cytoplasm. Responsible for the release of ribosomes from messenger RNA at the termination of protein biosynthesis. May increase the efficiency of translation by recycling ribosomes from one round of translation to another. In Pasteurella multocida (strain Pm70), this protein is Ribosome-recycling factor.